The sequence spans 113 residues: uncharacterized protein (113 aa).

The protein localises to the mitochondrion. This is an uncharacterized protein from Paramecium tetraurelia.